The chain runs to 446 residues: Ribosomal protein uS12 methylthiotransferase RimO (446 aa).

Residues 7–118 (PKIAFAHLGC…IVEVIERVER (112 aa)) enclose the MTTase N-terminal domain. Cysteine 16, cysteine 52, cysteine 81, cysteine 156, cysteine 160, and cysteine 163 together coordinate [4Fe-4S] cluster. One can recognise a Radical SAM core domain in the interval 142 to 371 (TTPAPVAYLR…MELQQPIAQR (230 aa)). The 67-residue stretch at 374–440 (AAEVGKIVPV…IYDLYGIIPA (67 aa)) folds into the TRAM domain.

The protein belongs to the methylthiotransferase family. RimO subfamily. It depends on [4Fe-4S] cluster as a cofactor.

It localises to the cytoplasm. It catalyses the reaction L-aspartate(89)-[ribosomal protein uS12]-hydrogen + (sulfur carrier)-SH + AH2 + 2 S-adenosyl-L-methionine = 3-methylsulfanyl-L-aspartate(89)-[ribosomal protein uS12]-hydrogen + (sulfur carrier)-H + 5'-deoxyadenosine + L-methionine + A + S-adenosyl-L-homocysteine + 2 H(+). Functionally, catalyzes the methylthiolation of an aspartic acid residue of ribosomal protein uS12. The protein is Ribosomal protein uS12 methylthiotransferase RimO of Thermosynechococcus vestitus (strain NIES-2133 / IAM M-273 / BP-1).